The primary structure comprises 543 residues: Vibriobactin-specific 2,3-dihydroxybenzoate-AMP ligase (543 aa).

A helical membrane pass occupies residues Phe-240–Leu-259.

It belongs to the ATP-dependent AMP-binding enzyme family.

Its subcellular location is the cell inner membrane. The catalysed reaction is 2,3-dihydroxybenzoate + holo-[ACP] + ATP = 2,3-dihydroxybenzoyl-[ACP] + AMP + diphosphate. Its pathway is siderophore biosynthesis; vibriobactin biosynthesis. Its function is as follows. Activation of the carboxylate group of 2,3-dihydroxy-benzoate (DHB), via ATP-dependent PPi exchange reactions, to the acyladenylate, preparing that molecule for the final stages of vibriobactin synthesis. The chain is Vibriobactin-specific 2,3-dihydroxybenzoate-AMP ligase (vibE) from Vibrio cholerae serotype O1 (strain ATCC 39315 / El Tor Inaba N16961).